Reading from the N-terminus, the 310-residue chain is ADP-L-glycero-D-manno-heptose-6-epimerase (310 aa).

NADP(+) is bound by residues 10 to 11, 31 to 32, Lys-38, Lys-53, 75 to 79, and Asn-92; these read FI, DN, and EGACS. Tyr-140 acts as the Proton acceptor in catalysis. An NADP(+)-binding site is contributed by Lys-144. Asn-169 is a binding site for substrate. NADP(+) contacts are provided by Val-170 and Lys-178. The active-site Proton acceptor is the Lys-178. Substrate-binding positions include Ser-180, His-187, 201 to 204, Arg-209, and Tyr-272; that span reads FEGS.

It belongs to the NAD(P)-dependent epimerase/dehydratase family. HldD subfamily. As to quaternary structure, homopentamer. NADP(+) serves as cofactor.

It carries out the reaction ADP-D-glycero-beta-D-manno-heptose = ADP-L-glycero-beta-D-manno-heptose. It functions in the pathway nucleotide-sugar biosynthesis; ADP-L-glycero-beta-D-manno-heptose biosynthesis; ADP-L-glycero-beta-D-manno-heptose from D-glycero-beta-D-manno-heptose 7-phosphate: step 4/4. Catalyzes the interconversion between ADP-D-glycero-beta-D-manno-heptose and ADP-L-glycero-beta-D-manno-heptose via an epimerization at carbon 6 of the heptose. The protein is ADP-L-glycero-D-manno-heptose-6-epimerase of Salmonella newport (strain SL254).